A 223-amino-acid chain; its full sequence is F420-dependent NADP reductase (223 aa).

NADP(+)-binding positions include 9–12 (TGDQ), 30–31 (SR), K35, L75, and V101.

Belongs to the F420-dependent NADP reductase family.

The catalysed reaction is reduced coenzyme F420-(gamma-L-Glu)(n) + NADP(+) = oxidized coenzyme F420-(gamma-L-Glu)(n) + NADPH + 2 H(+). Catalyzes the reduction of NADP(+) with F420H(2) via hydride transfer, and the reverse reaction, i.e. the reduction of F420 with NADPH. Probably functions in the regeneration of NADPH required in biosynthetic reactions. The polypeptide is F420-dependent NADP reductase (fno) (Methanocaldococcus jannaschii (strain ATCC 43067 / DSM 2661 / JAL-1 / JCM 10045 / NBRC 100440) (Methanococcus jannaschii)).